Reading from the N-terminus, the 759-residue chain is uncharacterized protein (759 aa).

This is an uncharacterized protein from Escherichia coli (strain K12).